We begin with the raw amino-acid sequence, 75 residues long: UPF0270 protein PST_1436 (75 aa).

The protein belongs to the UPF0270 family.

The chain is UPF0270 protein PST_1436 from Stutzerimonas stutzeri (strain A1501) (Pseudomonas stutzeri).